A 28-amino-acid chain; its full sequence is U15-ctenitoxin-Co1a (28 aa).

2 disulfide bridges follow: C3-C17 and C10-C22.

Expressed by the venom gland.

The protein localises to the secreted. Its function is as follows. Insecticidal neurotoxin that reversibly inhibits the N-methyl-D-aspartate (NMDA)-subtype of ionotropic glutamate receptor (GRIN) and inhibits inactivation of insect sodium channels (Nav). In vivo, is highly toxic to insects. This is U15-ctenitoxin-Co1a from Ctenus ornatus (Brazilian spider).